The primary structure comprises 146 residues: Hemoglobin subunit beta-1 (146 aa).

The Globin domain maps to 2–146 (HWTAEEKQLI…VAHALARRYH (145 aa)). Heme b-binding residues include histidine 63 and histidine 92.

Belongs to the globin family. As to quaternary structure, heterotetramer of two alpha chains and two beta chains. In terms of tissue distribution, red blood cells.

Involved in oxygen transport from the lung to the various peripheral tissues. The polypeptide is Hemoglobin subunit beta-1 (HBB1) (Iguana iguana (Common iguana)).